Consider the following 553-residue polypeptide: Putative transport protein ASA_0825 (553 aa).

5 consecutive transmembrane segments (helical) span residues 4–24, 29–49, 65–85, 95–115, and 158–178; these read IALSISMLSLVAVLGLWLGNW, VGLGIGGVLFGGIIVGHFAGV, FGLILFVYTIGIQVGPGFFSS, GFAALLVILGCVVAAGLHQLF, and MGYAVAYPFGICGILLTMWLV. 2 RCK C-terminal domains span residues 191–276 and 279–361; these read DLFE…VLGE and ETSL…VVGN. Transmembrane regions (helical) follow at residues 371 to 391, 403 to 425, 439 to 459, 465 to 485, 493 to 513, and 533 to 553; these read MLPVFIGIGLGVLLGSIPFYL, AGGPLVVALILSRIGSIGKLYWF, IVLFLAVVGFKSGAGFVDTLI, AWMMYGMAITLIPLLVVGVLA, YLTLCGLLAGSMTDPPALAFA, and LVMFLRIISPQLLAILLWAGV.

This sequence belongs to the AAE transporter (TC 2.A.81) family. YidE subfamily.

Its subcellular location is the cell membrane. This chain is Putative transport protein ASA_0825, found in Aeromonas salmonicida (strain A449).